We begin with the raw amino-acid sequence, 199 residues long: dITP/XTP pyrophosphatase (199 aa).

Serine 8–lysine 13 lines the substrate pocket. The Proton acceptor role is filled by aspartate 69. Aspartate 69 lines the Mg(2+) pocket. Residues serine 70, phenylalanine 154–asparagine 157, lysine 177, and histidine 182–arginine 183 contribute to the substrate site.

Belongs to the HAM1 NTPase family. As to quaternary structure, homodimer. Requires Mg(2+) as cofactor.

It catalyses the reaction XTP + H2O = XMP + diphosphate + H(+). It carries out the reaction dITP + H2O = dIMP + diphosphate + H(+). The catalysed reaction is ITP + H2O = IMP + diphosphate + H(+). Its function is as follows. Pyrophosphatase that catalyzes the hydrolysis of nucleoside triphosphates to their monophosphate derivatives, with a high preference for the non-canonical purine nucleotides XTP (xanthosine triphosphate), dITP (deoxyinosine triphosphate) and ITP. Seems to function as a house-cleaning enzyme that removes non-canonical purine nucleotides from the nucleotide pool, thus preventing their incorporation into DNA/RNA and avoiding chromosomal lesions. In Xylella fastidiosa (strain 9a5c), this protein is dITP/XTP pyrophosphatase.